Reading from the N-terminus, the 254-residue chain is MSTAPKAPDFLVVIPARLGSTRLPRKPLADIGGKPMVVRVAERAKQSLAHSVIVATDSPEIQAACDEHRIECLLTSPDHPTGTDRIAEVAQLLKLPSNALVVNVQGDEPLIPPELINQVAQTLAEHPQCAISTVAVLISEPSEIDNSNVVKVVLNREGEALYFSRAPIPYVRDPQELIKTEHLRHLGIYAYRADFLQAYTRLDPAPPEQAEALEQLRALWNGYRIAVHTAPEAPPAGVDTLDDLERVRQLLGNT.

This sequence belongs to the KdsB family.

The protein resides in the cytoplasm. It catalyses the reaction 3-deoxy-alpha-D-manno-oct-2-ulosonate + CTP = CMP-3-deoxy-beta-D-manno-octulosonate + diphosphate. It functions in the pathway nucleotide-sugar biosynthesis; CMP-3-deoxy-D-manno-octulosonate biosynthesis; CMP-3-deoxy-D-manno-octulosonate from 3-deoxy-D-manno-octulosonate and CTP: step 1/1. The protein operates within bacterial outer membrane biogenesis; lipopolysaccharide biosynthesis. Functionally, activates KDO (a required 8-carbon sugar) for incorporation into bacterial lipopolysaccharide in Gram-negative bacteria. This Polynucleobacter asymbioticus (strain DSM 18221 / CIP 109841 / QLW-P1DMWA-1) (Polynucleobacter necessarius subsp. asymbioticus) protein is 3-deoxy-manno-octulosonate cytidylyltransferase.